A 176-amino-acid chain; its full sequence is Heme oxygenase HutZ (176 aa).

H170 is a binding site for heme.

The protein belongs to the heme oxygenase HugZ/HutZ family. Homodimer. Interacts with HutX, leading to the transfer of the heme from HutX to apo-HutZ.

It carries out the reaction heme b + 3 AH2 + 3 O2 + 2 H(+) = biliverdin IXbeta + CO + Fe(2+) + 3 A + 3 H2O. The catalysed reaction is heme b + 3 AH2 + 3 O2 + 3 H(+) = biliverdin IXdelta + CO + Fe(2+) + 3 A + 3 H2O. With respect to regulation, activity is pH-dependent. A proximal hydrogen bond between Asp-132 and the heme axial ligant His-170 is essential for heme degradation activity. Heme-degradation reaction is inhibited by iron chelators. Functionally, involved in heme degradation. Catalyzes the degradation of heme to biliverdin, with the release of iron. Forms biliverdin beta and delta. Binds heme with high efficiency. The protein is Heme oxygenase HutZ of Vibrio cholerae serotype O1 (strain ATCC 39315 / El Tor Inaba N16961).